The following is a 361-amino-acid chain: Phosphoserine aminotransferase (361 aa).

Arg-42 contributes to the L-glutamate binding site. Pyridoxal 5'-phosphate-binding positions include 76 to 77 (AT), Trp-102, Thr-152, Asp-172, and Gln-195. Lys-196 is modified (N6-(pyridoxal phosphate)lysine). 237–238 (NT) contacts pyridoxal 5'-phosphate.

Belongs to the class-V pyridoxal-phosphate-dependent aminotransferase family. SerC subfamily. Homodimer. The cofactor is pyridoxal 5'-phosphate.

The protein resides in the cytoplasm. The enzyme catalyses O-phospho-L-serine + 2-oxoglutarate = 3-phosphooxypyruvate + L-glutamate. It catalyses the reaction 4-(phosphooxy)-L-threonine + 2-oxoglutarate = (R)-3-hydroxy-2-oxo-4-phosphooxybutanoate + L-glutamate. Its pathway is amino-acid biosynthesis; L-serine biosynthesis; L-serine from 3-phospho-D-glycerate: step 2/3. It participates in cofactor biosynthesis; pyridoxine 5'-phosphate biosynthesis; pyridoxine 5'-phosphate from D-erythrose 4-phosphate: step 3/5. Functionally, catalyzes the reversible conversion of 3-phosphohydroxypyruvate to phosphoserine and of 3-hydroxy-2-oxo-4-phosphonooxybutanoate to phosphohydroxythreonine. The sequence is that of Phosphoserine aminotransferase from Xanthomonas campestris pv. campestris (strain 8004).